Here is a 67-residue protein sequence, read N- to C-terminus: DNA-directed RNA polymerases I, II, and III subunit RPABC5 (67 aa).

Cys7, Cys10, Cys44, and Cys45 together coordinate Zn(2+).

It belongs to the archaeal Rpo10/eukaryotic RPB10 RNA polymerase subunit family. Component of the RNA polymerase I (Pol I), RNA polymerase II (Pol II) and RNA polymerase III (Pol III) complexes consisting of at least 13, 12 and 17 subunits, respectively.

Its subcellular location is the nucleus. DNA-dependent RNA polymerase catalyzes the transcription of DNA into RNA using the four ribonucleoside triphosphates as substrates. Common component of RNA polymerases I, II and III which synthesize ribosomal RNA precursors, mRNA precursors and many functional non-coding RNAs, and a small RNAs, such as 5S rRNA and tRNAs, respectively. Pol II is the central component of the basal RNA polymerase II transcription machinery. Pols are composed of mobile elements that move relative to each other. In Pol II, Polr2L is part of the core element with the central large cleft. In Drosophila melanogaster (Fruit fly), this protein is DNA-directed RNA polymerases I, II, and III subunit RPABC5.